A 408-amino-acid chain; its full sequence is RNA-splicing ligase RtcB1 (408 aa).

Mn(2+) contacts are provided by Asp-75, Cys-78, His-168, His-185, and His-281. 167–171 (NHFIE) contacts GMP. GMP-binding positions include 281 to 282 (HN), 313 to 316 (PGSM), Ser-320, 337 to 340 (HGAG), and Lys-407. His-337 functions as the GMP-histidine intermediate in the catalytic mechanism.

It belongs to the RtcB family. In terms of assembly, monomer. Mn(2+) serves as cofactor.

The enzyme catalyses a 3'-end 3'-phospho-ribonucleotide-RNA + a 5'-end dephospho-ribonucleoside-RNA + GTP = a ribonucleotidyl-ribonucleotide-RNA + GMP + diphosphate. It catalyses the reaction a 3'-end 2',3'-cyclophospho-ribonucleotide-RNA + a 5'-end dephospho-ribonucleoside-RNA + GTP + H2O = a ribonucleotidyl-ribonucleotide-RNA + GMP + diphosphate + H(+). Functionally, GTP-dependent RNA ligase that is involved in RNA repair. Joins RNA with 2',3'-cyclic-phosphate or 3'-phosphate ends to RNA with 5'-hydroxy ends. GTP-dependent RNA ligase that is involved in tRNA repair. Repairs broken tRNA(Asp) and tRNA(Arg) that have been cleaved by colicin E5 or colicin D, respectively. Does not repair damaged 16S rRNA in 30S ribosomal subunits. This chain is RNA-splicing ligase RtcB1, found in Escherichia coli (strain ATCC 25922 / DSM 1103 / LMG 8223 / NCIMB 12210 / NCTC 12241 / WDCM 00013 / Seattle 1946).